Consider the following 640-residue polypeptide: Threonine--tRNA ligase (640 aa).

A catalytic region spans residues 224-525 (DHRKLGKELD…LTEHYAGAFP (302 aa)). Zn(2+)-binding residues include C323, H374, and H502.

This sequence belongs to the class-II aminoacyl-tRNA synthetase family. As to quaternary structure, homodimer. Requires Zn(2+) as cofactor.

The protein localises to the cytoplasm. The enzyme catalyses tRNA(Thr) + L-threonine + ATP = L-threonyl-tRNA(Thr) + AMP + diphosphate + H(+). In terms of biological role, catalyzes the attachment of threonine to tRNA(Thr) in a two-step reaction: L-threonine is first activated by ATP to form Thr-AMP and then transferred to the acceptor end of tRNA(Thr). Also edits incorrectly charged L-seryl-tRNA(Thr). This is Threonine--tRNA ligase from Tropheryma whipplei (strain TW08/27) (Whipple's bacillus).